A 52-amino-acid polypeptide reads, in one-letter code: Large ribosomal subunit protein bL32c (52 aa).

This sequence belongs to the bacterial ribosomal protein bL32 family.

The protein localises to the plastid. The protein resides in the chloroplast. The chain is Large ribosomal subunit protein bL32c from Olimarabidopsis pumila (Dwarf rocket).